A 374-amino-acid chain; its full sequence is Queuine tRNA-ribosyltransferase (374 aa).

The active-site Proton acceptor is the Asp-95. Substrate contacts are provided by residues 95 to 99, Asp-149, Gln-191, and Gly-218; that span reads DSGGF. Residues 249-255 are RNA binding; the sequence is GVGTYRE. Catalysis depends on Asp-268, which acts as the Nucleophile. Positions 273-277 are RNA binding; important for wobble base 34 recognition; it reads TRWAR. Residues Cys-306, Cys-308, Cys-311, and His-337 each contribute to the Zn(2+) site.

This sequence belongs to the queuine tRNA-ribosyltransferase family. As to quaternary structure, homodimer. Within each dimer, one monomer is responsible for RNA recognition and catalysis, while the other monomer binds to the replacement base PreQ1. Requires Zn(2+) as cofactor.

The catalysed reaction is 7-aminomethyl-7-carbaguanine + guanosine(34) in tRNA = 7-aminomethyl-7-carbaguanosine(34) in tRNA + guanine. Its pathway is tRNA modification; tRNA-queuosine biosynthesis. Catalyzes the base-exchange of a guanine (G) residue with the queuine precursor 7-aminomethyl-7-deazaguanine (PreQ1) at position 34 (anticodon wobble position) in tRNAs with GU(N) anticodons (tRNA-Asp, -Asn, -His and -Tyr). Catalysis occurs through a double-displacement mechanism. The nucleophile active site attacks the C1' of nucleotide 34 to detach the guanine base from the RNA, forming a covalent enzyme-RNA intermediate. The proton acceptor active site deprotonates the incoming PreQ1, allowing a nucleophilic attack on the C1' of the ribose to form the product. After dissociation, two additional enzymatic reactions on the tRNA convert PreQ1 to queuine (Q), resulting in the hypermodified nucleoside queuosine (7-(((4,5-cis-dihydroxy-2-cyclopenten-1-yl)amino)methyl)-7-deazaguanosine). This Nostoc sp. (strain PCC 7120 / SAG 25.82 / UTEX 2576) protein is Queuine tRNA-ribosyltransferase.